The sequence spans 216 residues: Protein-L-isoaspartate O-methyltransferase (216 aa).

Residue Ser66 is part of the active site.

This sequence belongs to the methyltransferase superfamily. L-isoaspartyl/D-aspartyl protein methyltransferase family.

It localises to the cytoplasm. The enzyme catalyses [protein]-L-isoaspartate + S-adenosyl-L-methionine = [protein]-L-isoaspartate alpha-methyl ester + S-adenosyl-L-homocysteine. Catalyzes the methyl esterification of L-isoaspartyl residues in peptides and proteins that result from spontaneous decomposition of normal L-aspartyl and L-asparaginyl residues. It plays a role in the repair and/or degradation of damaged proteins. In Dechloromonas aromatica (strain RCB), this protein is Protein-L-isoaspartate O-methyltransferase.